We begin with the raw amino-acid sequence, 205 residues long: Holliday junction branch migration complex subunit RuvA (205 aa).

Residues Met-1–Ile-64 form a domain I region. The tract at residues His-65 to Glu-143 is domain II. Positions Arg-144–Pro-156 are flexible linker. The interval Val-157–Leu-205 is domain III.

It belongs to the RuvA family. Homotetramer. Forms an RuvA(8)-RuvB(12)-Holliday junction (HJ) complex. HJ DNA is sandwiched between 2 RuvA tetramers; dsDNA enters through RuvA and exits via RuvB. An RuvB hexamer assembles on each DNA strand where it exits the tetramer. Each RuvB hexamer is contacted by two RuvA subunits (via domain III) on 2 adjacent RuvB subunits; this complex drives branch migration. In the full resolvosome a probable DNA-RuvA(4)-RuvB(12)-RuvC(2) complex forms which resolves the HJ.

It localises to the cytoplasm. The RuvA-RuvB-RuvC complex processes Holliday junction (HJ) DNA during genetic recombination and DNA repair, while the RuvA-RuvB complex plays an important role in the rescue of blocked DNA replication forks via replication fork reversal (RFR). RuvA specifically binds to HJ cruciform DNA, conferring on it an open structure. The RuvB hexamer acts as an ATP-dependent pump, pulling dsDNA into and through the RuvAB complex. HJ branch migration allows RuvC to scan DNA until it finds its consensus sequence, where it cleaves and resolves the cruciform DNA. The chain is Holliday junction branch migration complex subunit RuvA from Shewanella amazonensis (strain ATCC BAA-1098 / SB2B).